We begin with the raw amino-acid sequence, 319 residues long: MEPILAPNPNRFVIFPIQYYDIWNMYKKAEASFWTVEEVDISKDINDWNKLTPDEKYFIKHVLAFFAASDGIVNENLAERFCTEVQITEARCFYGFQMAIENIHSEMYSLLIDTYVKDSNEKNYLFNAIETMPCVKKKADWAQKWIHDSAGYGERLIAFAAVEGIFFSGSFASIFWLKKRGLMPGLTFSNELISRDEGLHCDFACLMFKHLLYPPSEETVRSIITDAVSIEQEFLTAALPVKLIGMNCEMMKTYIEFVADRLISELGFKKIYNVTNPFDFMENISLEGKTNFFEKRVGEYQKMGVMSQEDNHFSLDVDF.

Fe cation contacts are provided by Asp-70, Glu-101, and His-104. The active site involves Tyr-108. Glu-163, Glu-197, and His-200 together coordinate Fe cation. Residues 313-319 (FSLDVDF) form an interaction with R1 region.

It belongs to the ribonucleoside diphosphate reductase small chain family. Interacts with RNR1/OPG080 subunit. Can interact with host RNR1 supunit. Fe cation serves as cofactor.

The catalysed reaction is a 2'-deoxyribonucleoside 5'-diphosphate + [thioredoxin]-disulfide + H2O = a ribonucleoside 5'-diphosphate + [thioredoxin]-dithiol. Its function is as follows. Ribonucleoside-diphosphate reductase holoenzyme provides the precursors necessary for viral DNA synthesis. Allows virus growth in non-dividing cells. Catalyzes the biosynthesis of deoxyribonucleotides from the corresponding ribonucleotides. This Vaccinia virus (strain Copenhagen) (VACV) protein is Ribonucleoside-diphosphate reductase small chain (OPG048).